The following is a 109-amino-acid chain: Nucleoid-associated protein ASA_2087 (109 aa).

Disordered stretches follow at residues 1-23 (MFGK…RMQK) and 87-109 (QSKS…KLPF). The segment covering 11–23 (MKQAQQMQERMQK) has biased composition (low complexity).

Belongs to the YbaB/EbfC family. Homodimer.

The protein resides in the cytoplasm. It localises to the nucleoid. Functionally, binds to DNA and alters its conformation. May be involved in regulation of gene expression, nucleoid organization and DNA protection. The chain is Nucleoid-associated protein ASA_2087 from Aeromonas salmonicida (strain A449).